A 199-amino-acid chain; its full sequence is Thymidine kinase (199 aa).

ATP is bound by residues 15-22 (GSMFSGKS) and 88-91 (DEVQ). The Proton acceptor role is filled by E89. The Zn(2+) site is built by C145, C148, C183, and H186.

It belongs to the thymidine kinase family. In terms of assembly, homotetramer.

The protein resides in the cytoplasm. The enzyme catalyses thymidine + ATP = dTMP + ADP + H(+). In Staphylococcus epidermidis (strain ATCC 12228 / FDA PCI 1200), this protein is Thymidine kinase.